The sequence spans 554 residues: MQFDYIIIGAGSAGNVLATRLTEDPNTTVLLLEAGGPDYRFDFRTQMPAALAYPLQGKRYNWAYETEPEPYMNHRRMECGRGKGLGGSSLINGMCYIRGNAMDLDNWAKEPGLEHWSYLDCLPYYRKAETRDIGPNDYHGGDGPVSVTTPKPGNNPLFEAMVTAGVQAGYPRTDDLNGYQQEGFGPMDRTVTPQGRRASTARGYLDQARGRPNLTIRTHALTDHIIFAGKRAVGVEWLEGESTIPSKATANKEVLLCAGAIASPQILQRSGVGNPELLRQFDIPVVHDLPGVGENLQDHLEMYLQYECKEPVSLYPALQWWNQPKIGAEWLFGGTGIGASNQFEAGGFIRSRAEFAWPNIQYHFLPVAINYNGSNAVKEHGFQCHVGSMRSPSRGHVRLKSRDPHAHPAILFNYMSHEQDWQEFRDAIRITREIMNQPALDKYRGREISPGTECQSDAELDEFVRNHAETAFHPCGTCKMGYDEMAVVDGEGRVHGLEGVRVVDASIMPQIITGNLNATTIMIGEKMADAIRGRQPLPRSTAAYYVAGGAPVRR.

Residue 4–33 coordinates FAD; sequence DYIIIGAGSAGNVLATRLTEDPNTTVLLLE. The Proton acceptor role is filled by His-473.

It belongs to the GMC oxidoreductase family. It depends on FAD as a cofactor.

The enzyme catalyses choline + A = betaine aldehyde + AH2. It catalyses the reaction betaine aldehyde + NAD(+) + H2O = glycine betaine + NADH + 2 H(+). It participates in amine and polyamine biosynthesis; betaine biosynthesis via choline pathway; betaine aldehyde from choline (cytochrome c reductase route): step 1/1. Its function is as follows. Involved in the biosynthesis of the osmoprotectant glycine betaine. Catalyzes the oxidation of choline to betaine aldehyde and betaine aldehyde to glycine betaine at the same rate. The chain is Oxygen-dependent choline dehydrogenase from Klebsiella pneumoniae (strain 342).